The chain runs to 493 residues: MSFKDLRSFIDHLEANGELKRISYPVDPHLEMTEIADRVLRAKGPALLFENPKDHHMPVLVNLFGTPKRVAMALGKDDPLALREVGELLAFLKEPEPPRGFKDAIAKIPMFKQALNMPPKTVRNPPCQQVIKTGDEVDLTQLPIQHCWPGDVAPLVTWGLTITKGPRKSRQNLGIYRQQLLGKNKLIMRWLSHRGGALDFADFKQQFPGERYPVVVALGADPVTILGAVTPVPDSMSEYAFAGLLRGERTEVCKALSCDLEVPATSEIILEGYIDPEELAEEGPYGDHTGYYNETDKFPVFTVTHITHRKDAIYHSTYTGRPPDEPAMLGVALNEVFVPILRKQYPEIVDFYLPPEGCSYRMAVISIRKQYPGHAKRVMMGAWSFLRQFMYTKFIVIVDEDVNCRDWQDVIWAITTRMDPKRDTVMIENTPIDYLDFASPVAGLGSKMGLDATNKWEGETNREWGTPIVMDPKVKQKIDSIWDELGIDDSPTL.

A Mn(2+)-binding site is contributed by Asn172. Residues 175–177 (IYR), 189–191 (RWL), and 194–195 (RG) each bind prenylated FMN. Glu238 is a Mn(2+) binding site. Asp287 serves as the catalytic Proton donor.

The protein belongs to the UbiD family. Homohexamer. Prenylated FMN is required as a cofactor. Mn(2+) serves as cofactor.

It is found in the cell membrane. It carries out the reaction a 4-hydroxy-3-(all-trans-polyprenyl)benzoate + H(+) = a 2-(all-trans-polyprenyl)phenol + CO2. It participates in cofactor biosynthesis; ubiquinone biosynthesis. Functionally, catalyzes the decarboxylation of 3-octaprenyl-4-hydroxy benzoate to 2-octaprenylphenol, an intermediate step in ubiquinone biosynthesis. This chain is 3-octaprenyl-4-hydroxybenzoate carboxy-lyase, found in Shewanella baltica (strain OS195).